The chain runs to 268 residues: Glycine/sarcosine N-methyltransferase (268 aa).

Residues Tyr26, Trp34, Arg43, Ala67, Asp88, 114 to 115, and Leu132 each bind S-adenosyl-L-methionine; that span reads DW. 3 residues coordinate substrate: Asn134, Arg167, and Tyr206.

It belongs to the class I-like SAM-binding methyltransferase superfamily. Glycine N-methyltransferase family. In terms of assembly, monomer.

The enzyme catalyses glycine + 2 S-adenosyl-L-methionine = N,N-dimethylglycine + 2 S-adenosyl-L-homocysteine + 2 H(+). The catalysed reaction is glycine + S-adenosyl-L-methionine = sarcosine + S-adenosyl-L-homocysteine + H(+). It carries out the reaction sarcosine + S-adenosyl-L-methionine = N,N-dimethylglycine + S-adenosyl-L-homocysteine + H(+). It participates in amine and polyamine biosynthesis; betaine biosynthesis via glycine pathway; betaine from glycine: step 1/3. Its pathway is amine and polyamine biosynthesis; betaine biosynthesis via glycine pathway; betaine from glycine: step 2/3. Its activity is regulated as follows. p-chloromercuribenzoic acid inhibits more than 95% of the GSMT activities on glycine and sarcosine, and S-adenosylhomocysteine (AdoHcy) inhibits completely GSMT activities. Catalyzes the methylation of glycine and sarcosine to sarcosine and dimethylglycine, respectively, with S-adenosylmethionine (AdoMet) acting as the methyl donor. It has strict specificity for glycine and sarcosine as the methyl group acceptors. This chain is Glycine/sarcosine N-methyltransferase, found in Halorhodospira halochloris (Ectothiorhodospira halochloris).